The following is a 692-amino-acid chain: Ribonuclease J (692 aa).

Positions 1–91 (MTDNNQNNEN…RNYAKEELDN (91 aa)) are disordered. The segment covering 9–25 (ENHENSSENSKDHHEAR) has biased composition (basic and acidic residues). A compositionally biased stretch (basic residues) spans 57 to 79 (HHKKEHRPNKKPNNHHKPKHASQ). An N6-acetyllysine mark is found at Lys-135 and Lys-141. Zn(2+)-binding residues include His-209, His-211, Asp-213, His-214, His-278, and Asp-300. N6-acetyllysine occurs at positions 324, 338, and 398. 501–505 (HVSGH) serves as a coordination point for substrate. At Lys-512 the chain carries N6-acetyllysine. Zn(2+) is bound at residue His-527. Residues Lys-548, Lys-635, and Lys-650 each carry the N6-acetyllysine modification.

It belongs to the metallo-beta-lactamase superfamily. RNA-metabolizing metallo-beta-lactamase-like family. Bacterial RNase J subfamily. In terms of assembly, homodimer. Homotetramer; dimer of homodimers. Interacts with RNA helicase RhpA, might be a member of a minimal RNA degradosome complex. It depends on Zn(2+) as a cofactor. Post-translationally, acetylated on nine lysine residues. Some of the residues are acetylated by multiple different mechanisms. RimL is partially responsible for the acetylation of Lys-324, Lys-398 and Lys-650. HPB8_1270 homolog is partially responsible for the acetylation of Lys-324, Lys-398, Lys-512 and Lys-650. Acetyl-phosphate-mediated non-enzymatic acetylation pathway takes part in the acetylation of Lys-135, Lys-324, Lys-398, Lys-512 and Lys-650. Acetylation of the remaining residues Lys-141, Lys-338, Lys-548 and Lys-635 occurs by a yet undetermined mechanism. Acetylation on a number of these residues is important for growth regulation and proper cell morphology.

Its subcellular location is the cytoplasm. With respect to regulation, catalytic activity is regulated by the balance between homodimers and homotetramers, with homotetramers being the active forms of this enzyme. Acetylation allosterically regulates the homooligomerization state and hence the catalytic activity. Its function is as follows. An RNase that has 5'-3' exoribonuclease and endoribonuclease activity. Degrades 5'-monophosphorylated ssRNA and dsRNA, considerably more active on ssRNA. Association with RhpA significantly increases the dsRNase activity. Degrades RNA substrate with hairpin structures at both ends with low activity, but presence of RhpA significantly increases the activity on this substrate. Stimulates ATPase activity of RNA helicase RhpA. Involved in stabilization of mRNA but apparently not rRNA. The chain is Ribonuclease J from Helicobacter pylori (strain J99 / ATCC 700824) (Campylobacter pylori J99).